The following is a 742-amino-acid chain: Photosystem I P700 chlorophyll a apoprotein A2 (742 aa).

8 consecutive transmembrane segments (helical) span residues 46-69 (LFSTHFGHLAIIGLWVAGNLFHIA), 135-158 (LFQGAIFINILVCWLLFAGWLHLQ), 175-199 (LNHHLAVLFGFSSIAWTGHLIHVAI), 273-291 (IAHHHLAIGVVFIIAGHMY), 336-359 (LHFQLGLALASLGVACSLVAQHMG), 375-401 (SALYTHHQYIAMFLMVGAFSHGAIFFV), 423-445 (ALISHLSWVTMLLGFHTLGIYVH), and 525-543 (FLVHHAIALGLHTTALILI). 2 residues coordinate [4Fe-4S] cluster: Cys567 and Cys576. 2 consecutive transmembrane segments (helical) span residues 583–604 (ATYLAMFWALNTIAWITFYWHW) and 651–673 (LSPWAWMFLFGHLIWATGFMFLI). 3 residues coordinate divinyl chlorophyll a: His662, Met670, and Tyr678. Trp679 contacts phylloquinone. Residues 715–735 (LVGLTHFTVGNFVTFGAFVIA) form a helical membrane-spanning segment.

The protein belongs to the PsaA/PsaB family. As to quaternary structure, the PsaA/B heterodimer binds the P700 divinyl chlorophyll special pair and subsequent electron acceptors. PSI consists of a core antenna complex that captures photons, and an electron transfer chain that converts photonic excitation into a charge separation. The cyanobacterial PSI reaction center is composed of one copy each of PsaA,B,C,D,E,F,I,J,K,L,M and X, and forms trimeric complexes. It depends on PSI electron transfer chain: 5 divinyl chlorophyll a, 1 divinyl chlorophyll a', 2 phylloquinones and 3 4Fe-4S clusters. PSI core antenna: 90 divinyl chlorophyll a, 22 carotenoids, 3 phospholipids and 1 galactolipid. P700 is a divinyl chlorophyll a/divinyl chlorophyll a' dimer, A0 is one or more divinyl chlorophyll a, A1 is one or both phylloquinones and FX is a shared 4Fe-4S iron-sulfur center. as a cofactor.

It is found in the cellular thylakoid membrane. The enzyme catalyses reduced [plastocyanin] + hnu + oxidized [2Fe-2S]-[ferredoxin] = oxidized [plastocyanin] + reduced [2Fe-2S]-[ferredoxin]. Functionally, psaA and PsaB bind P700, the primary electron donor of photosystem I (PSI), as well as the electron acceptors A0, A1 and FX. PSI is a plastocyanin/cytochrome c6-ferredoxin oxidoreductase, converting photonic excitation into a charge separation, which transfers an electron from the donor P700 chlorophyll pair to the spectroscopically characterized acceptors A0, A1, FX, FA and FB in turn. Oxidized P700 is reduced on the lumenal side of the thylakoid membrane by plastocyanin or cytochrome c6. The polypeptide is Photosystem I P700 chlorophyll a apoprotein A2 (Prochlorococcus marinus (strain NATL2A)).